We begin with the raw amino-acid sequence, 330 residues long: Mas-related G-protein coupled receptor member X2 (330 aa).

Residues 1-33 (MDPTTPAWGTESTTMNGNDQALPLLCGKETLIL) lie on the Extracellular side of the membrane. The helical transmembrane segment at 34-54 (VLLILFIALVGLVGNAFVLWL) threads the bilayer. Topologically, residues 55 to 63 (LGFRMRRNA) are cytoplasmic. Residues 64–84 (FSVYVLSLAGADFLFLCFPMI) form a helical membrane-spanning segment. Topologically, residues 85–96 (NCLEYLINFFHS) are extracellular. Residues 97–117 (ISINFPSFFTTVMTCAYLAGL) form a helical membrane-spanning segment. At 118–144 (SMLSAISTERCLSVLWPIWYRCRRPRH) the chain is on the cytoplasmic side. Residues 145-165 (LSAVLCVLLWALSLLLSILEG) traverse the membrane as a helical segment. The Extracellular segment spans residues 166–184 (KFCGLLFSDGDSGWCQTFD). Residues 185 to 205 (FITAAWLMFLFVVLCGSSLAL) form a helical membrane-spanning segment. Over 206–228 (LVRILCGSQGLPLTRLYLTILLT) the chain is Cytoplasmic. Residues 229–249 (VLIFLLCGLPFGIQWFLILWI) traverse the membrane as a helical segment. Residues 250–264 (WKNSDVLFCHIHPVS) are Extracellular-facing. Residues 265 to 285 (VVLSSFNSSANPIIYFFVGSF) form a helical membrane-spanning segment. Residues 286–330 (RKQWRLRQPVLKLALQRALQDTAEVDHSEGCFSQGTLEMSGSSLV) lie on the Cytoplasmic side of the membrane.

It belongs to the G-protein coupled receptor 1 family. Mas subfamily.

The protein localises to the cell membrane. Its function is as follows. Mast cell-specific receptor for basic secretagogues, i.e. cationic amphiphilic drugs, as well as endo- or exogenous peptides, consisting of a basic head group and a hydrophobic core. Recognizes and binds small molecules containing a cyclized tetrahydroisoquinoline (THIQ), such as non-steroidal neuromuscular blocking drugs (NMBDs), including tubocurarine and atracurium. In response to these compounds, mediates pseudo-allergic reactions characterized by histamine release, inflammation and airway contraction. The polypeptide is Mas-related G-protein coupled receptor member X2 (MRGPRX2) (Rhinopithecus bieti (Black snub-nosed monkey)).